Here is a 321-residue protein sequence, read N- to C-terminus: Glutaminase (321 aa).

Substrate contacts are provided by serine 69, asparagine 120, glutamate 165, asparagine 172, tyrosine 196, tyrosine 248, and valine 266.

Belongs to the glutaminase family. In terms of assembly, homotetramer.

The enzyme catalyses L-glutamine + H2O = L-glutamate + NH4(+). The chain is Glutaminase from Parabacteroides distasonis (strain ATCC 8503 / DSM 20701 / CIP 104284 / JCM 5825 / NCTC 11152).